The sequence spans 189 residues: Large ribosomal subunit protein uL6 (189 aa).

It belongs to the universal ribosomal protein uL6 family. Part of the 50S ribosomal subunit.

This protein binds to the 23S rRNA, and is important in its secondary structure. It is located near the subunit interface in the base of the L7/L12 stalk, and near the tRNA binding site of the peptidyltransferase center. The polypeptide is Large ribosomal subunit protein uL6 (Bacteroides thetaiotaomicron (strain ATCC 29148 / DSM 2079 / JCM 5827 / CCUG 10774 / NCTC 10582 / VPI-5482 / E50)).